An 87-amino-acid chain; its full sequence is uncharacterized protein (87 aa).

The signal sequence occupies residues 1–26 (MMSTQHFILSLTILIIISNLHDEVNA). Cystine bridges form between Cys61–Cys75, Cys68–Cys79, and Cys74–Cys84.

It is found in the secreted. This is an uncharacterized protein from Schistosoma japonicum (Blood fluke).